Reading from the N-terminus, the 430-residue chain is Probable ribosomal RNA small subunit methyltransferase B (430 aa).

Residues 246–252 (CAAPGSK), aspartate 270, aspartate 299, and aspartate 318 each bind S-adenosyl-L-methionine. Cysteine 371 serves as the catalytic Nucleophile.

It belongs to the class I-like SAM-binding methyltransferase superfamily. RsmB/NOP family.

It localises to the cytoplasm. The catalysed reaction is cytidine(967) in 16S rRNA + S-adenosyl-L-methionine = 5-methylcytidine(967) in 16S rRNA + S-adenosyl-L-homocysteine + H(+). Functionally, specifically methylates the cytosine at position 967 (m5C967) of 16S rRNA. The chain is Probable ribosomal RNA small subunit methyltransferase B from Coxiella burnetii (strain RSA 493 / Nine Mile phase I).